The sequence spans 105 residues: Ferredoxin-2 (105 aa).

The 2Fe-2S ferredoxin-type domain occupies 4–94 (YQVEVIYQGQ…DLKIETHKED (91 aa)). Residues cysteine 40, cysteine 45, cysteine 48, and cysteine 78 each coordinate [2Fe-2S] cluster.

It belongs to the 2Fe2S plant-type ferredoxin family. As to quaternary structure, forms a complex with heterodimeric ferredoxin-thioredoxin reductase (FTR) and thioredoxin. [2Fe-2S] cluster is required as a cofactor.

Ferredoxins are iron-sulfur proteins that transfer electrons in a wide variety of metabolic reactions. This chain is Ferredoxin-2 (petF2), found in Synechococcus sp. (strain ATCC 27144 / PCC 6301 / SAUG 1402/1) (Anacystis nidulans).